A 156-amino-acid chain; its full sequence is 6,7-dimethyl-8-ribityllumazine synthase (156 aa).

5-amino-6-(D-ribitylamino)uracil-binding positions include phenylalanine 22, 56–58 (AFE), and 80–82 (VVI). 85 to 86 (ST) is a binding site for (2S)-2-hydroxy-3-oxobutyl phosphate. The Proton donor role is filled by histidine 88. Phenylalanine 113 is a 5-amino-6-(D-ribitylamino)uracil binding site. (2S)-2-hydroxy-3-oxobutyl phosphate is bound at residue arginine 127.

This sequence belongs to the DMRL synthase family.

The catalysed reaction is (2S)-2-hydroxy-3-oxobutyl phosphate + 5-amino-6-(D-ribitylamino)uracil = 6,7-dimethyl-8-(1-D-ribityl)lumazine + phosphate + 2 H2O + H(+). It participates in cofactor biosynthesis; riboflavin biosynthesis; riboflavin from 2-hydroxy-3-oxobutyl phosphate and 5-amino-6-(D-ribitylamino)uracil: step 1/2. Its function is as follows. Catalyzes the formation of 6,7-dimethyl-8-ribityllumazine by condensation of 5-amino-6-(D-ribitylamino)uracil with 3,4-dihydroxy-2-butanone 4-phosphate. This is the penultimate step in the biosynthesis of riboflavin. The chain is 6,7-dimethyl-8-ribityllumazine synthase from Streptococcus agalactiae serotype Ia (strain ATCC 27591 / A909 / CDC SS700).